The chain runs to 372 residues: Cytochrome b (372 aa).

Helical transmembrane passes span 25–45 (FGSMLLTCLALQTMTGFFLAI), 69–90 (WMMQNLHAIGASMFFICIYIHI), 105–125 (WLSGTTLLIILMATAFFGYVL), and 170–190 (FFALHFILPFTIISMSSIHIM). Heme b-binding residues include histidine 75 and histidine 89. Residues histidine 174 and histidine 188 each coordinate heme b. Histidine 193 serves as a coordination point for a ubiquinone. Transmembrane regions (helical) follow at residues 218 to 238 (HKDMLMFTIMITMLFIIMSFT), 280 to 300 (LGGTVALVLSVTILLTMPFTH), 312 to 332 (LMQFMFWTLVATFITITWAAT), and 339 to 358 (FTSIGQVTAILYFLFFTMNP).

It belongs to the cytochrome b family. As to quaternary structure, the cytochrome bc1 complex contains 3 respiratory subunits (MT-CYB, CYC1 and UQCRFS1), 2 core proteins (UQCRC1 and UQCRC2) and probably 6 low-molecular weight proteins. Heme b is required as a cofactor.

Its subcellular location is the mitochondrion inner membrane. Functionally, component of the ubiquinol-cytochrome c reductase complex (complex III or cytochrome b-c1 complex) that is part of the mitochondrial respiratory chain. The b-c1 complex mediates electron transfer from ubiquinol to cytochrome c. Contributes to the generation of a proton gradient across the mitochondrial membrane that is then used for ATP synthesis. The protein is Cytochrome b (MT-CYB) of Pantherophis vulpinus (Western fox snake).